Consider the following 414-residue polypeptide: Gamma-glutamyl phosphate reductase (414 aa).

The protein belongs to the gamma-glutamyl phosphate reductase family.

The protein resides in the cytoplasm. The catalysed reaction is L-glutamate 5-semialdehyde + phosphate + NADP(+) = L-glutamyl 5-phosphate + NADPH + H(+). It participates in amino-acid biosynthesis; L-proline biosynthesis; L-glutamate 5-semialdehyde from L-glutamate: step 2/2. In terms of biological role, catalyzes the NADPH-dependent reduction of L-glutamate 5-phosphate into L-glutamate 5-semialdehyde and phosphate. The product spontaneously undergoes cyclization to form 1-pyrroline-5-carboxylate. In Xanthomonas campestris pv. campestris (strain ATCC 33913 / DSM 3586 / NCPPB 528 / LMG 568 / P 25), this protein is Gamma-glutamyl phosphate reductase.